The following is a 274-amino-acid chain: Purine nucleoside phosphorylase 1 (274 aa).

Residues Ser-29, His-60, 80 to 82 (RFH), and Ala-112 each bind phosphate. Ser-29 carries the post-translational modification Phosphoserine. Glu-192 is an a purine D-ribonucleoside binding site. Ser-211 lines the phosphate pocket. Asn-234 contributes to the a purine D-ribonucleoside binding site.

The protein belongs to the PNP/MTAP phosphorylase family. As to quaternary structure, homotrimer.

It catalyses the reaction a purine D-ribonucleoside + phosphate = a purine nucleobase + alpha-D-ribose 1-phosphate. It carries out the reaction a purine 2'-deoxy-D-ribonucleoside + phosphate = a purine nucleobase + 2-deoxy-alpha-D-ribose 1-phosphate. It participates in purine metabolism; purine nucleoside salvage. In terms of biological role, the purine nucleoside phosphorylases catalyze the phosphorolytic breakdown of the N-glycosidic bond in the beta-(deoxy)ribonucleoside molecules, with the formation of the corresponding free purine bases and pentose-1-phosphate. Cleaves guanosine, inosine, 2'-deoxyguanosine and 2'-deoxyinosine. The sequence is that of Purine nucleoside phosphorylase 1 (punA) from Geobacillus stearothermophilus (Bacillus stearothermophilus).